A 532-amino-acid chain; its full sequence is Phosphoribosylamine--glycine ligase, chloroplastic (532 aa).

The N-terminal 75 residues, 1–75 (MSSLCASNCY…IQRRLFLLRC (75 aa)), are a transit peptide targeting the chloroplast. An ATP-grasp domain is found at 204-412 (KNLCHKYNIP…LAKVLLAACK (209 aa)).

Belongs to the GARS family.

Its subcellular location is the plastid. The protein localises to the chloroplast. It carries out the reaction 5-phospho-beta-D-ribosylamine + glycine + ATP = N(1)-(5-phospho-beta-D-ribosyl)glycinamide + ADP + phosphate + H(+). It functions in the pathway purine metabolism; IMP biosynthesis via de novo pathway; N(1)-(5-phospho-D-ribosyl)glycinamide from 5-phospho-alpha-D-ribose 1-diphosphate: step 2/2. This is Phosphoribosylamine--glycine ligase, chloroplastic (PUR2) from Arabidopsis thaliana (Mouse-ear cress).